We begin with the raw amino-acid sequence, 320 residues long: Peroxidase 66 (320 aa).

Residues 1-29 (MAASVSASCLNRLSSLAVVLVALASAASA) form the signal peptide. Residue Gln-30 is modified to Pyrrolidone carboxylic acid. 4 disulfides stabilise this stretch: Cys-40-Cys-118, Cys-73-Cys-78, Cys-124-Cys-315, and Cys-202-Cys-227. His-71 (proton acceptor) is an active-site residue. Residues Asp-72, Val-75, Gly-77, Asp-79, and Ser-81 each contribute to the Ca(2+) site. N-linked (GlcNAc...) asparagine glycans are attached at residues Asn-85 and Asn-96. Pro-165 is a binding site for substrate. His-195 serves as a coordination point for heme b. Thr-196 is a Ca(2+) binding site. Asn-211 is a glycosylation site (N-linked (GlcNAc...) asparagine). Residues Asp-239, Thr-242, and Asp-247 each coordinate Ca(2+).

It belongs to the peroxidase family. Classical plant (class III) peroxidase subfamily. The cofactor is heme b. Ca(2+) serves as cofactor.

It localises to the secreted. The catalysed reaction is 2 a phenolic donor + H2O2 = 2 a phenolic radical donor + 2 H2O. In terms of biological role, removal of H(2)O(2), oxidation of toxic reductants, biosynthesis and degradation of lignin, suberization, auxin catabolism, response to environmental stresses such as wounding, pathogen attack and oxidative stress. These functions might be dependent on each isozyme/isoform in each plant tissue. The protein is Peroxidase 66 (PER66) of Zea mays (Maize).